The primary structure comprises 401 residues: Calcium-responsive transcription coactivator (401 aa).

Residues 1 to 148 (MSVAFASARP…TLPTTSMSMS (148 aa)) are N-terminal auto-inhibitory domain; necessary for interaction with SMARCA4/BRG1. Positions 50 to 53 (YQQI) match the SH2-binding motif. Disordered stretches follow at residues 72–171 (QSLL…VPMQ) and 214–401 (TRAR…NYQQ). Positions 85–106 (LGPGALSQSGSSQGLHPQGSLS) are enriched in low complexity. Positions 128-137 (NHVSMQQTAQ) are enriched in polar residues. The span at 138–149 (STLPTTSMSMSG) shows a compositional bias: low complexity. Residues 149 to 237 (GSGHGTGPGY…GGSMMGQRPM (89 aa)) form a methionine-rich intra-molecular domain region. The segment at 251–322 (YLGQEEYYSE…SQYSQQQAGY (72 aa)) is MFD domain. Polar residues-rich tracts occupy residues 260 to 276 (EQYSHSQGSAEPMSQQY) and 285 to 294 (AYQQSSYTEQ). A compositionally biased stretch (basic and acidic residues) spans 295 to 304 (SYDRSFEDPT). Over residues 310-374 (GGNSQYSQQQ…QGQGQQYGSY (65 aa)) the composition is skewed to low complexity. Positions 339 to 401 (NQQSYPGQQQ…EQGQYGNYQQ (63 aa)) are necessary for nuclear localization. The SH2-binding signature appears at 358–361 (SQYS). Positions 375–387 (RTSQTGPSAQQQR) are enriched in polar residues. The SH3-binding signature appears at 376–384 (TSQTGPSAQ). The segment covering 389 to 401 (YGYEQGQYGNYQQ) has biased composition (low complexity). Residues 392 to 401 (EQGQYGNYQQ) are necessary for interaction with CREBBP and for the recruitment of CREBBP to the nuclear bodies. An SH2-binding motif is present at residues 396–399 (YGNY).

This sequence belongs to the SS18 family. Homodimer. Dimerization may be necessary for its function in neuronal dendritic development. Interacts (via C-terminus) with CREBBP (via N-terminus), EP300 and SMARCA4/BRG1. Interacts with the nBAF complex. Association with CREBBP facilitates transcription while the association with SMARCA4/BRG1 suppresses CREST-mediated transcription in resting neurons. As to expression, brain (at protein level). Also found in the heart, liver, kidney and testis.

It localises to the nucleus. The protein localises to the chromosome. The protein resides in the centromere. Its subcellular location is the kinetochore. Its function is as follows. Transcriptional activator which is required for calcium-dependent dendritic growth and branching in cortical neurons. Recruits CREB-binding protein (CREBBP) to nuclear bodies. Component of the CREST-BRG1 complex, a multiprotein complex that regulates promoter activation by orchestrating a calcium-dependent release of a repressor complex and a recruitment of an activator complex. In resting neurons, transcription of the c-FOS promoter is inhibited by BRG1-dependent recruitment of a phospho-RB1-HDAC1 repressor complex. Upon calcium influx, RB1 is dephosphorylated by calcineurin, which leads to release of the repressor complex. At the same time, there is increased recruitment of CREBBP to the promoter by a CREST-dependent mechanism, which leads to transcriptional activation. The CREST-BRG1 complex also binds to the NR2B promoter, and activity-dependent induction of NR2B expression involves a release of HDAC1 and recruitment of CREBBP. The polypeptide is Calcium-responsive transcription coactivator (Ss18l1) (Rattus norvegicus (Rat)).